The chain runs to 913 residues: Cadherin-4 (913 aa).

The signal sequence occupies residues 1 to 19 (MRTGSRLLLVLLVWGSAAA). Residues 20 to 166 (LNGDLTVRPT…SAKGLRRQKR (147 aa)) constitute a propeptide that is removed on maturation. Cadherin domains are found at residues 167–274 (DWVI…RPEF), 275–389 (INQV…PPEF), 390–504 (TTST…APYF), 505–610 (PTNH…DNAP), and 611–721 (ELLP…TIGA). At 167–731 (DWVIPPINVP…VAAAGLGTGA (565 aa)) the chain is on the extracellular side. N-linked (GlcNAc...) asparagine glycosylation is found at Asn-280, Asn-409, Asn-554, Asn-629, Asn-658, and Asn-699. A helical transmembrane segment spans residues 732-753 (IIAILICIIILLTMVLLFVVWM). Topologically, residues 754–913 (KRREKERHTK…ADMYGGGEED (160 aa)) are cytoplasmic.

As to expression, embryonic brain and neuronal retina.

It is found in the cell membrane. Functionally, cadherins are calcium-dependent cell adhesion proteins. They preferentially interact with themselves in a homophilic manner in connecting cells; cadherins may thus contribute to the sorting of heterogeneous cell types. May play an important role in retinal development. The protein is Cadherin-4 (CDH4) of Gallus gallus (Chicken).